Consider the following 562-residue polypeptide: Probable malate:quinone oxidoreductase (562 aa).

Belongs to the MQO family. FAD is required as a cofactor.

The enzyme catalyses (S)-malate + a quinone = a quinol + oxaloacetate. It participates in carbohydrate metabolism; tricarboxylic acid cycle; oxaloacetate from (S)-malate (quinone route): step 1/1. This Stenotrophomonas maltophilia (strain K279a) protein is Probable malate:quinone oxidoreductase.